The primary structure comprises 287 residues: ATP synthase gamma chain (287 aa).

This sequence belongs to the ATPase gamma chain family. As to quaternary structure, F-type ATPases have 2 components, CF(1) - the catalytic core - and CF(0) - the membrane proton channel. CF(1) has five subunits: alpha(3), beta(3), gamma(1), delta(1), epsilon(1). CF(0) has three main subunits: a, b and c.

Its subcellular location is the cell inner membrane. Its function is as follows. Produces ATP from ADP in the presence of a proton gradient across the membrane. The gamma chain is believed to be important in regulating ATPase activity and the flow of protons through the CF(0) complex. The chain is ATP synthase gamma chain from Stenotrophomonas maltophilia (strain K279a).